Consider the following 383-residue polypeptide: Succinyl-diaminopimelate desuccinylase (383 aa).

Residue His73 participates in Zn(2+) binding. Asp75 is an active-site residue. A Zn(2+)-binding site is contributed by Asp107. Glu141 serves as the catalytic Proton acceptor. The Zn(2+) site is built by Glu142, Glu170, and His356.

Belongs to the peptidase M20A family. DapE subfamily. In terms of assembly, homodimer. It depends on Zn(2+) as a cofactor. Co(2+) serves as cofactor.

The catalysed reaction is N-succinyl-(2S,6S)-2,6-diaminopimelate + H2O = (2S,6S)-2,6-diaminopimelate + succinate. The protein operates within amino-acid biosynthesis; L-lysine biosynthesis via DAP pathway; LL-2,6-diaminopimelate from (S)-tetrahydrodipicolinate (succinylase route): step 3/3. In terms of biological role, catalyzes the hydrolysis of N-succinyl-L,L-diaminopimelic acid (SDAP), forming succinate and LL-2,6-diaminopimelate (DAP), an intermediate involved in the bacterial biosynthesis of lysine and meso-diaminopimelic acid, an essential component of bacterial cell walls. This Pseudomonas paraeruginosa (strain DSM 24068 / PA7) (Pseudomonas aeruginosa (strain PA7)) protein is Succinyl-diaminopimelate desuccinylase.